The primary structure comprises 267 residues: 4-diphosphocytidyl-2-C-methyl-D-erythritol kinase (267 aa).

Lys8 is a catalytic residue. 90-100 is a binding site for ATP; that stretch reads PIGAGLGGGSS. Asp132 is an active-site residue.

Belongs to the GHMP kinase family. IspE subfamily.

It carries out the reaction 4-CDP-2-C-methyl-D-erythritol + ATP = 4-CDP-2-C-methyl-D-erythritol 2-phosphate + ADP + H(+). It functions in the pathway isoprenoid biosynthesis; isopentenyl diphosphate biosynthesis via DXP pathway; isopentenyl diphosphate from 1-deoxy-D-xylulose 5-phosphate: step 3/6. Its function is as follows. Catalyzes the phosphorylation of the position 2 hydroxy group of 4-diphosphocytidyl-2C-methyl-D-erythritol. The polypeptide is 4-diphosphocytidyl-2-C-methyl-D-erythritol kinase (Azobacteroides pseudotrichonymphae genomovar. CFP2).